Reading from the N-terminus, the 712-residue chain is tRNA 5-methylaminomethyl-2-thiouridine biosynthesis bifunctional protein MnmC (712 aa).

A tRNA (mnm(5)s(2)U34)-methyltransferase region spans residues 1–268 (MPNMRHRVNS…RRALRHAQSD (268 aa)). An FAD-dependent cmnm(5)s(2)U34 oxidoreductase region spans residues 292-712 (IGGGVASTHL…MRKLIKGKAL (421 aa)).

This sequence in the N-terminal section; belongs to the methyltransferase superfamily. tRNA (mnm(5)s(2)U34)-methyltransferase family. It in the C-terminal section; belongs to the DAO family. FAD is required as a cofactor.

It is found in the cytoplasm. It catalyses the reaction 5-aminomethyl-2-thiouridine(34) in tRNA + S-adenosyl-L-methionine = 5-methylaminomethyl-2-thiouridine(34) in tRNA + S-adenosyl-L-homocysteine + H(+). Functionally, catalyzes the last two steps in the biosynthesis of 5-methylaminomethyl-2-thiouridine (mnm(5)s(2)U) at the wobble position (U34) in tRNA. Catalyzes the FAD-dependent demodification of cmnm(5)s(2)U34 to nm(5)s(2)U34, followed by the transfer of a methyl group from S-adenosyl-L-methionine to nm(5)s(2)U34, to form mnm(5)s(2)U34. The sequence is that of tRNA 5-methylaminomethyl-2-thiouridine biosynthesis bifunctional protein MnmC from Shewanella sediminis (strain HAW-EB3).